The sequence spans 552 residues: Probable malate:quinone oxidoreductase (552 aa).

The segment at 530–552 is disordered; it reads DAKPATPEAKPAQASSPQHDMAL. Residues 542-552 show a composition bias toward polar residues; sequence QASSPQHDMAL.

Belongs to the MQO family. Requires FAD as cofactor.

The enzyme catalyses (S)-malate + a quinone = a quinol + oxaloacetate. It functions in the pathway carbohydrate metabolism; tricarboxylic acid cycle; oxaloacetate from (S)-malate (quinone route): step 1/1. The protein is Probable malate:quinone oxidoreductase of Cronobacter sakazakii (strain ATCC BAA-894) (Enterobacter sakazakii).